Reading from the N-terminus, the 467-residue chain is MKALCDRFVPQQCSSSSKSDTHDKSPLVSDSGPSDNKSKFTLWSNVFTSSSSVSQPYRESSTSGHKQVCTTRNGWTAFVKRVSMASGAIRRFQERVLGPNRTGLPSTTSDVWLLGVCYKISADENSGETDTGTVLAALQLDFSSKILMTYRKGFEPFRDTTYTSDVNWGCMIRSSQMLFAQALLFHRLGRAWTKKSELPEQEYLETLEPFGDSEPSAFSIHNLIIAGASYGLAAGSWVGPYAICRAWESLACKKRKQTDSKNQTLPMAVHIVSGSEDGERGGAPILCIEDATKSCLEFSKGQSEWTPIILLVPLVLGLDSVNPRYIPSLVATFTFPQSVGILGGKPGASTYIVGVQEDKGFYLDPHEVQQVVTVNKETPDVDTSSYHCNVLRYVPLESLDPSLALGFYCRDKDDFDDFCLRALKLAEESNGAPLFTVTQTHTAINQSNYGFADDDSEDEREDDWQML.

Residues 1 to 35 (MKALCDRFVPQQCSSSSKSDTHDKSPLVSDSGPSD) are disordered. Catalysis depends on C170, which acts as the Nucleophile. Residues D364 and H366 contribute to the active site. Residues 448-467 (NYGFADDDSEDEREDDWQML) are disordered. Positions 452-467 (ADDDSEDEREDDWQML) are enriched in acidic residues.

It belongs to the peptidase C54 family. In terms of assembly, interacts with ATG8. Constitutively expressed.

The protein localises to the cytoplasm. It catalyses the reaction [protein]-C-terminal L-amino acid-glycyl-phosphatidylethanolamide + H2O = [protein]-C-terminal L-amino acid-glycine + a 1,2-diacyl-sn-glycero-3-phosphoethanolamine. In terms of biological role, cysteine protease that plays a key role in autophagy by mediating both proteolytic activation and delipidation of ATG8 family proteins. The protease activity is required for proteolytic activation of ATG8 family proteins: cleaves the C-terminal amino acid of ATG8 proteins to reveal a C-terminal glycine. Exposure of the glycine at the C-terminus is essential for ATG8 proteins conjugation to phosphatidylethanolamine (PE) and insertion to membranes, which is necessary for autophagy. In addition to the protease activity, also mediates delipidation of PE-conjugated ATG8 proteins. The sequence is that of Cysteine protease ATG4a from Arabidopsis thaliana (Mouse-ear cress).